Reading from the N-terminus, the 1247-residue chain is Structural polyprotein (1247 aa).

Residues 36–67 form a host transcription inhibition region; the sequence is RPAGQLAQLISAVSRLALRTVPQKPRRTRKIK. The tract at residues 54–103 is disordered; sequence RTVPQKPRRTRKIKKQKQVKQEQQSTTNQKKKAPKQKQTQKKKRPGRRER. Basic residues-rich tracts occupy residues 59 to 71 and 82 to 100; these read KPRR…KQKQ and QKKK…RPGR. The short motif at 60–98 is the Nuclear localization signal element; the sequence is PRRTRKIKKQKQVKQEQQSTTNQKKKAPKQKQTQKKKRP. A binding to the viral RNA region spans residues 83–113; it reads KKKAPKQKQTQKKKRPGRRERMCMKIENDCI. The tract at residues 98-112 is ribosome-binding; the sequence is PGRRERMCMKIENDC. Cys112 and Cys127 are oxidised to a cystine. In terms of domain architecture, Peptidase S3 spans 112–260; sequence CIFEVRHEGK…KITPEGSVEW (149 aa). His138 serves as the catalytic Charge relay system. The Nuclear export signal motif lies at 143–153; the sequence is IDNADLAKLAF. The tract at residues 154–159 is interaction with spike glycoprotein E2; that stretch reads KRSSKY. Asp160 serves as the catalytic Charge relay system. Residues 182 to 192 are dimerization of the capsid protein; the sequence is PEGYYNWHHGA. The active-site Charge relay system is Ser212. The segment at 218 to 222 is dimerization of the capsid protein; it reads DNKGR. The functions as an uncleaved signal peptide for the precursor of protein E3/E2 stretch occupies residues 261–273; sequence SLALPVMCLLANT. Intrachain disulfides connect Cys268-Cys277, Cys282-Cys286, Cys285-Cys317, Cys343-Cys449, Cys346-Cys352, Cys415-Cys429, Cys477-Cys590, Cys525-Cys549, and Cys527-Cys544. N-linked (GlcNAc...) asparagine; by host glycosylation occurs at Asn272. N-linked (GlcNAc...) asparagine; by host glycosylation is found at Asn587 and Asn669. The helical transmembrane segment at 692-712 threads the bilayer; the sequence is IAVLAAASIVITSLVGLSLGM. The interval 715–719 is interaction with the capsid protein; sequence CARRR. Residues Cys720, Cys740, and Cys741 are each lipidated (S-palmitoyl cysteine; by host). A helical membrane pass occupies residues 720–740; that stretch reads CITPYELTPGATIPFLLGVLC. The interval 720 to 740 is transient transmembrane before p62-6K protein processing; the sequence is CITPYELTPGATIPFLLGVLC. Cys720 and Cys741 are joined by a disulfide. A helical membrane pass occupies residues 763-783; that stretch reads PLFWLQLLIPLSAAIVVCNCL. Cystine bridges form between Cys857/Cys922, Cys870/Cys902, Cys871/Cys904, and Cys876/Cys886. Positions 892 to 909 are E1 fusion peptide loop; that stretch reads VYPFMWGGAYCFCDAENT. 2 N-linked (GlcNAc...) asparagine; by host glycosylation sites follow: Asn949 and Asn1078. Intrachain disulfides connect Cys1067-Cys1079, Cys1109-Cys1184, Cys1114-Cys1188, and Cys1136-Cys1178. The helical transmembrane segment at 1224–1244 threads the bilayer; sequence GVGLVVAIAALILIIVLCVSF. A lipid anchor (S-palmitoyl cysteine; by host) is attached at Cys1241. Cys1241 carries S-stearoyl cysteine; by host lipidation.

In terms of assembly, homodimer. Homomultimer. Interacts with host karyopherin KPNA4; this interaction allows the nuclear import of the viral capsid protein. Interacts with spike glycoprotein E2. Interacts with host IRAK1; the interaction leads to inhibition of IRAK1-dependent signaling. As to quaternary structure, the precursor of protein E3/E2 and E1 form a heterodimer shortly after synthesis. The precursor of protein E3/E2 and E1 form a heterodimer shortly after synthesis. Processing of the precursor of protein E3/E2 into E2 and E3 results in a heterodimer of the spike glycoproteins E2 and E1. Spike at virion surface are constituted of three E2-E1 heterodimers. After target cell attachment and endocytosis, E1 change conformation to form homotrimers. Interacts with 6K protein. In terms of assembly, interacts with spike glycoprotein E1. Processing of the precursor of protein E3/E2 into E2 and E3 results in a heterodimer of the spike glycoproteins E2 and E1. Spike at virion surface are constituted of a trimer of E2-E1 heterodimers. Interacts with 6K protein. Interacts with host MXRA8; this interaction mediates virus entry. As to quaternary structure, oligomer. Interacts with spike glycoprotein E1. Interacts with spike glycoprotein E2. Post-translationally, structural polyprotein: Specific enzymatic cleavages in vivo yield mature proteins. Capsid protein is auto-cleaved during polyprotein translation, unmasking a signal peptide at the N-terminus of the precursor of E3/E2. The remaining polyprotein is then targeted to the host endoplasmic reticulum, where host signal peptidase cleaves it into pE2, 6K and E1 proteins. pE2 is further processed to mature E3 and E2 by host furin in trans-Golgi vesicle. In terms of processing, palmitoylated via thioester bonds. These palmitoylations may induce disruption of the C-terminus transmembrane. This would result in the reorientation of E2 C-terminus from lumenal to cytoplasmic side. N-glycosylated. Post-translationally, palmitoylated via thioester bonds.

The protein resides in the virion. The protein localises to the host cytoplasm. Its subcellular location is the host cell membrane. It localises to the host nucleus. It is found in the virion membrane. The protein resides in the host Golgi apparatus. The protein localises to the host trans-Golgi network. Its subcellular location is the host endoplasmic reticulum. It carries out the reaction Autocatalytic release of the core protein from the N-terminus of the togavirus structural polyprotein by hydrolysis of a -Trp-|-Ser- bond.. Its function is as follows. Forms an icosahedral capsid with a T=4 symmetry composed of 240 copies of the capsid protein surrounded by a lipid membrane through which penetrate 80 spikes composed of trimers of E1-E2 heterodimers. The capsid protein binds to the viral RNA genome at a site adjacent to a ribosome binding site for viral genome translation following genome release. Possesses a protease activity that results in its autocatalytic cleavage from the nascent structural protein. Following its self-cleavage, the capsid protein transiently associates with ribosomes, and within several minutes the protein binds to viral RNA and rapidly assembles into icosahedric core particles. The resulting nucleocapsid eventually associates with the cytoplasmic domain of the spike glycoprotein E2 at the cell membrane, leading to budding and formation of mature virions. In case of infection, new virions attach to target cells and after clathrin-mediated endocytosis their membrane fuses with the host endosomal membrane. This leads to the release of the nucleocapsid into the cytoplasm, followed by an uncoating event necessary for the genomic RNA to become accessible. The uncoating might be triggered by the interaction of capsid proteins with ribosomes. Binding of ribosomes would release the genomic RNA since the same region is genomic RNA-binding and ribosome-binding. Specifically inhibits interleukin-1 receptor-associated kinase 1/IRAK1-dependent signaling during viral entry, representing a means by which the alphaviruses may evade innate immune detection and activation prior to viral gene expression. In terms of biological role, provides the signal sequence for the translocation of the precursor of protein E3/E2 to the host endoplasmic reticulum. Furin-cleaved E3 remains associated with spike glycoprotein E1 and mediates pH protection of the latter during the transport via the secretory pathway. After virion release from the host cell, the assembly protein E3 is gradually released in the extracellular space. Plays a role in viral attachment to target host cell, by binding to the cell receptor MXRA8. Synthesized as a p62 precursor which is processed by furin at the cell membrane just before virion budding, giving rise to E2-E1 heterodimer. The p62-E1 heterodimer is stable, whereas E2-E1 is unstable and dissociate at low pH. p62 is processed at the last step, presumably to avoid E1 fusion activation before its final export to cell surface. E2 C-terminus contains a transitory transmembrane that would be disrupted by palmitoylation, resulting in reorientation of the C-terminal tail from lumenal to cytoplasmic side. This step is critical since E2 C-terminus is involved in budding by interacting with capsid proteins. This release of E2 C-terminus in cytoplasm occurs lately in protein export, and precludes premature assembly of particles at the endoplasmic reticulum membrane. Functionally, acts as a viroporin that participates in virus glycoprotein processing and transport to the plasma membrane, cell permeabilization and budding of viral particles. Disrupts the calcium homeostasis of the cell, probably at the endoplasmic reticulum level. This leads to cytoplasmic calcium elevation. Because of its lipophilic properties, the 6K protein is postulated to influence the selection of lipids that interact with the transmembrane domains of the glycoproteins, which, in turn, affects the deformability of the bilayer required for the extreme curvature that occurs as budding proceeds. Present in low amount in virions, about 3% compared to viral glycoproteins. Its function is as follows. Class II viral fusion protein. Fusion activity is inactive as long as E1 is bound to E2 in mature virion. After virus attachment to target cell via host MXRA8 and endocytosis, acidification of the endosome induce dissociation of E1/E2 heterodimer and concomitant trimerization of the E1 subunits. This E1 trimer is fusion active, and promotes release of viral nucleocapsid in cytoplasm after endosome and viral membrane fusion. Efficient fusion requires the presence of cholesterol and sphingolipid in the target membrane. The polypeptide is Structural polyprotein (O'nyong-nyong virus (strain Gulu) (ONNV)).